We begin with the raw amino-acid sequence, 145 residues long: SsrA-binding protein (145 aa).

The protein belongs to the SmpB family.

It is found in the cytoplasm. In terms of biological role, required for rescue of stalled ribosomes mediated by trans-translation. Binds to transfer-messenger RNA (tmRNA), required for stable association of tmRNA with ribosomes. tmRNA and SmpB together mimic tRNA shape, replacing the anticodon stem-loop with SmpB. tmRNA is encoded by the ssrA gene; the 2 termini fold to resemble tRNA(Ala) and it encodes a 'tag peptide', a short internal open reading frame. During trans-translation Ala-aminoacylated tmRNA acts like a tRNA, entering the A-site of stalled ribosomes, displacing the stalled mRNA. The ribosome then switches to translate the ORF on the tmRNA; the nascent peptide is terminated with the 'tag peptide' encoded by the tmRNA and targeted for degradation. The ribosome is freed to recommence translation, which seems to be the essential function of trans-translation. The polypeptide is SsrA-binding protein (Mycoplasmopsis pulmonis (strain UAB CTIP) (Mycoplasma pulmonis)).